The following is a 226-amino-acid chain: Large ribosomal subunit protein uL3 (226 aa).

The segment covering M135 to V150 has biased composition (polar residues). The segment at M135 to Q158 is disordered. An N5-methylglutamine modification is found at Q158.

The protein belongs to the universal ribosomal protein uL3 family. As to quaternary structure, part of the 50S ribosomal subunit. Forms a cluster with proteins L14 and L19. In terms of processing, methylated by PrmB.

One of the primary rRNA binding proteins, it binds directly near the 3'-end of the 23S rRNA, where it nucleates assembly of the 50S subunit. In Variovorax paradoxus (strain S110), this protein is Large ribosomal subunit protein uL3.